We begin with the raw amino-acid sequence, 190 residues long: Recombination protein RecR (190 aa).

The C4-type zinc-finger motif lies at 58 to 73; it reads CEQCGALSENELCEIC. Residues 81-167 enclose the Toprim domain; the sequence is NILCIVESPK…TFSKIAQGIP (87 aa).

Belongs to the RecR family.

May play a role in DNA repair. It seems to be involved in an RecBC-independent recombinational process of DNA repair. It may act with RecF and RecO. The protein is Recombination protein RecR of Campylobacter jejuni subsp. doylei (strain ATCC BAA-1458 / RM4099 / 269.97).